A 561-amino-acid polypeptide reads, in one-letter code: Excitatory amino acid transporter 4 (561 aa).

The Cytoplasmic portion of the chain corresponds to 1–52 (MSSHGNSLFLRESGAGGGCLQGLQDSLQQRALRTRLRLQTMTREHVRRFLRR). Serine 2 carries the phosphoserine modification. Transmembrane regions (helical) follow at residues 53–73 (NAFI…AFAL), 96–116 (MLQM…MASL), and 130–150 (VYYM…VTII). N-linked (GlcNAc...) asparagine glycans are attached at residues asparagine 213, asparagine 229, and asparagine 236. The next 3 membrane-spanning stretches (helical) occupy residues 259 to 282 (SANG…IGGM), 292 to 319 (FFDS…LFLI), and 341 to 362 (LTVI…YFLV). Residues 368–398 (FPFIGGILQALITAMGTSSSSATLPITFRCL) constitute an intramembrane region (discontinuously helical). 385-387 (SSS) serves as a coordination point for L-aspartate. The helical transmembrane segment at 408-434 (ITRFVLPVGATVNMDGTALYEALAAIF) threads the bilayer. Positions 416, 418, and 420 each coordinate Na(+). Residues threonine 424, 465-469 (IPQAG), aspartate 498, and asparagine 505 contribute to the L-aspartate site. An intramembrane region (discontinuously helical) is located at residues 448–481 (ITTISITATAASVGAAGIPQAGLVTMVIVLTSVG). A helical transmembrane segment spans residues 495 to 516 (WFLDRLRTMTNVLGDSIGAAVI). Asparagine 505 and aspartate 509 together coordinate Na(+).

Belongs to the dicarboxylate/amino acid:cation symporter (DAACS) (TC 2.A.23) family. SLC1A6 subfamily. As to quaternary structure, homotrimer.

It localises to the cell membrane. It carries out the reaction K(+)(in) + L-glutamate(out) + 3 Na(+)(out) + H(+)(out) = K(+)(out) + L-glutamate(in) + 3 Na(+)(in) + H(+)(in). The catalysed reaction is K(+)(in) + L-aspartate(out) + 3 Na(+)(out) + H(+)(out) = K(+)(out) + L-aspartate(in) + 3 Na(+)(in) + H(+)(in). It catalyses the reaction D-aspartate(out) + K(+)(in) + 3 Na(+)(out) + H(+)(out) = D-aspartate(in) + K(+)(out) + 3 Na(+)(in) + H(+)(in). Its function is as follows. Sodium-dependent, high-affinity amino acid transporter that mediates the uptake of L-glutamate and also L-aspartate and D-aspartate. Functions as a symporter that transports one amino acid molecule together with two or three Na(+) ions and one proton, in parallel with the counter-transport of one K(+) ion. Mediates Cl(-) flux that is not coupled to amino acid transport; this avoids the accumulation of negative charges due to aspartate and Na(+) symport. Plays a redundant role in the rapid removal of released glutamate from the synaptic cleft, which is essential for terminating the postsynaptic action of glutamate. The sequence is that of Excitatory amino acid transporter 4 (Slc1a6) from Rattus norvegicus (Rat).